The following is a 142-amino-acid chain: ATP synthase epsilon chain (142 aa).

The protein belongs to the ATPase epsilon chain family. As to quaternary structure, F-type ATPases have 2 components, CF(1) - the catalytic core - and CF(0) - the membrane proton channel. CF(1) has five subunits: alpha(3), beta(3), gamma(1), delta(1), epsilon(1). CF(0) has three main subunits: a, b and c.

The protein localises to the cell inner membrane. In terms of biological role, produces ATP from ADP in the presence of a proton gradient across the membrane. The protein is ATP synthase epsilon chain of Maridesulfovibrio salexigens (strain ATCC 14822 / DSM 2638 / NCIMB 8403 / VKM B-1763) (Desulfovibrio salexigens).